A 68-amino-acid chain; its full sequence is Large ribosomal subunit protein uL29 (68 aa).

Belongs to the universal ribosomal protein uL29 family.

This Nitrobacter winogradskyi (strain ATCC 25391 / DSM 10237 / CIP 104748 / NCIMB 11846 / Nb-255) protein is Large ribosomal subunit protein uL29.